The sequence spans 476 residues: Glycogen synthase (476 aa).

Lysine 15 contacts ADP-alpha-D-glucose.

It belongs to the glycosyltransferase 1 family. Bacterial/plant glycogen synthase subfamily.

It carries out the reaction [(1-&gt;4)-alpha-D-glucosyl](n) + ADP-alpha-D-glucose = [(1-&gt;4)-alpha-D-glucosyl](n+1) + ADP + H(+). Its pathway is glycan biosynthesis; glycogen biosynthesis. Synthesizes alpha-1,4-glucan chains using ADP-glucose. In Marinomonas sp. (strain MWYL1), this protein is Glycogen synthase.